The following is a 406-amino-acid chain: Serine hydroxymethyltransferase (406 aa).

(6S)-5,6,7,8-tetrahydrofolate is bound by residues Leu111 and 115-117 (GHL). An N6-(pyridoxal phosphate)lysine modification is found at Lys220.

This sequence belongs to the SHMT family. As to quaternary structure, homodimer. Pyridoxal 5'-phosphate is required as a cofactor.

It is found in the cytoplasm. It catalyses the reaction (6R)-5,10-methylene-5,6,7,8-tetrahydrofolate + glycine + H2O = (6S)-5,6,7,8-tetrahydrofolate + L-serine. Its pathway is one-carbon metabolism; tetrahydrofolate interconversion. It functions in the pathway amino-acid biosynthesis; glycine biosynthesis; glycine from L-serine: step 1/1. Functionally, catalyzes the reversible interconversion of serine and glycine with tetrahydrofolate (THF) serving as the one-carbon carrier. This reaction serves as the major source of one-carbon groups required for the biosynthesis of purines, thymidylate, methionine, and other important biomolecules. Also exhibits THF-independent aldolase activity toward beta-hydroxyamino acids, producing glycine and aldehydes, via a retro-aldol mechanism. This Mycoplasma pneumoniae (strain ATCC 29342 / M129 / Subtype 1) (Mycoplasmoides pneumoniae) protein is Serine hydroxymethyltransferase.